The sequence spans 570 residues: Sulfite reductase [NADPH] hemoprotein beta-component (570 aa).

Residues C434, C440, C479, and C483 each coordinate [4Fe-4S] cluster. C483 lines the siroheme pocket.

The protein belongs to the nitrite and sulfite reductase 4Fe-4S domain family. In terms of assembly, alpha(8)-beta(8). The alpha component is a flavoprotein, the beta component is a hemoprotein. The cofactor is siroheme. [4Fe-4S] cluster serves as cofactor.

It carries out the reaction hydrogen sulfide + 3 NADP(+) + 3 H2O = sulfite + 3 NADPH + 4 H(+). It functions in the pathway sulfur metabolism; hydrogen sulfide biosynthesis; hydrogen sulfide from sulfite (NADPH route): step 1/1. Functionally, component of the sulfite reductase complex that catalyzes the 6-electron reduction of sulfite to sulfide. This is one of several activities required for the biosynthesis of L-cysteine from sulfate. In Salmonella typhimurium (strain LT2 / SGSC1412 / ATCC 700720), this protein is Sulfite reductase [NADPH] hemoprotein beta-component (cysI).